The sequence spans 899 residues: Probable dipeptidyl-aminopeptidase B (899 aa).

2 disordered regions span residues 1–37 (MARKDKDNGPEFVPLTNRSHRSSASFSSTDSLSSDGS) and 51–84 (KITRTQLPEENPYRDDDVELERGDNIFSRPTENS). At 1-91 (MARKDKDNGP…ENSKRNRGSR (91 aa)) the chain is on the cytoplasmic side. The segment covering 22-37 (SSASFSSTDSLSSDGS) has biased composition (low complexity). The span at 61-74 (NPYRDDDVELERGD) shows a compositional bias: basic and acidic residues. The chain crosses the membrane as a helical; Signal-anchor for type II membrane protein span at residues 92-112 (LIWVVGLLCLGGWILAFVLFW). The Vacuolar portion of the chain corresponds to 113-899 (GRRNSELSSS…QQGNSVLPVT (787 aa)). N-linked (GlcNAc...) asparagine glycans are attached at residues N149, N194, N347, N409, N513, N638, and N643. S752 acts as the Charge relay system in catalysis. N-linked (GlcNAc...) asparagine glycosylation occurs at N811. Catalysis depends on charge relay system residues D829 and H862.

It belongs to the peptidase S9B family.

Its subcellular location is the vacuole membrane. The catalysed reaction is Release of an N-terminal dipeptide, Xaa-Yaa-|-Zaa-, from a polypeptide, preferentially when Yaa is Pro, provided Zaa is neither Pro nor hydroxyproline.. Functionally, type IV dipeptidyl-peptidase which removes N-terminal dipeptides sequentially from polypeptides having unsubstituted N-termini provided that the penultimate residue is proline. This chain is Probable dipeptidyl-aminopeptidase B (dapB), found in Talaromyces marneffei (strain ATCC 18224 / CBS 334.59 / QM 7333) (Penicillium marneffei).